Here is a 795-residue protein sequence, read N- to C-terminus: Phenylalanine--tRNA ligase beta subunit (795 aa).

The tRNA-binding domain maps to 39–148 (AGEFNGVVVG…ADAPVGKDFR (110 aa)). The B5 domain occupies 401-476 (PKLNKVQLRR…RIYGYNSIPN (76 aa)). The Mg(2+) site is built by Asp-454, Asp-460, Glu-463, and Glu-464. One can recognise an FDX-ACB domain in the interval 701-794 (SKFPANKRDL…LKDRFNAYLR (94 aa)).

The protein belongs to the phenylalanyl-tRNA synthetase beta subunit family. Type 1 subfamily. In terms of assembly, tetramer of two alpha and two beta subunits. The cofactor is Mg(2+).

The protein resides in the cytoplasm. It carries out the reaction tRNA(Phe) + L-phenylalanine + ATP = L-phenylalanyl-tRNA(Phe) + AMP + diphosphate + H(+). This Mannheimia succiniciproducens (strain KCTC 0769BP / MBEL55E) protein is Phenylalanine--tRNA ligase beta subunit.